Consider the following 851-residue polypeptide: MARLNPSKPSSRGGKPRSSSADAMAEHKPPPGRPKREGEGASKKKAKSGGFESMGLCEEVYRGVRHKGYRVPTPIQRKAMPLILAGHDIAAMARTGSGKTAAFLVPMIQRLRRHDAGAGIRALILSPTRDLATQTLKFAQQLGKFTDLKISLIVGGDSMESQFEELAENPDIIIATPGRLVHHLAEVEDLNLRTVEYVVFDEADSLFSLGLIQQLHDILHKLSDTRQTLLFSATLPQALADFAKAGLRDPQIVRLDLDKKISPDLKLAFFTLRQEEKLAALLYLVRERISSEEQTIIFVSTKHHVEFLNILFREEGLEPSLSYGAMDQEARNIHISKFRARKTMILIVTDVAARGLDIPLLDNVVNWDFPAKPKLFVHRVGRVARQGRSGTAYTFVTSEDMAYLLDLHLFLSKPLRPAPTEEELLKDMEGMNLKIDRALANGETVYGRFPQTIIDLVSDGIREVINGCTDLIALEKPCTNAFHLYLKTRPMPSTESIRRVKDLPREGLHPIFRDVLGSDELSALAFSERLKSFRPKQTILEAEGEAARGSNQWLDVMKKKREVHEGIINLVHQKNNVDHEPKEELVENISNWERKDVCGNKRKLQSFRDEEYYISSVPQNQHLEAGLSVRANEGFVENRLDAAVLDLVDDETSGMQAQKTRYHWKKNKFVKLNSGDRVTATGKIKTESGAKLKPTKTGIYKKWQQKTHRSIDTGRKYGGFAEEGASTTGSHQRGNRKHTAAGRGRRYIPNADVPSEIRNPEQIQKSRQQKAMDIARMKNRSTKESKFQKFQKNNRRHDGPSKDGKFQKNRRPDGNGKNRRPDGNGKGRGKGKGNANGFGKGKGKMKGKGTR.

The interval 1–49 is disordered; it reads MARLNPSKPSSRGGKPRSSSADAMAEHKPPPGRPKREGEGASKKKAKSG. The segment covering 7–20 has biased composition (low complexity); that stretch reads SKPSSRGGKPRSSS. Positions 24 to 42 are enriched in basic and acidic residues; that stretch reads MAEHKPPPGRPKREGEGAS. The Q motif signature appears at 49–77; the sequence is GGFESMGLCEEVYRGVRHKGYRVPTPIQR. Residues 80 to 253 form the Helicase ATP-binding domain; that stretch reads MPLILAGHDI…KAGLRDPQIV (174 aa). 93-100 lines the ATP pocket; it reads ARTGSGKT. The short motif at 201 to 204 is the DEAD box element; it reads DEAD. In terms of domain architecture, Helicase C-terminal spans 277–426; sequence KLAALLYLVR…PAPTEEELLK (150 aa). Residues 702-851 are disordered; sequence KWQQKTHRSI…KGKMKGKGTR (150 aa). Residues 733 to 746 are compositionally biased toward basic residues; the sequence is RGNRKHTAAGRGRR. 2 stretches are compositionally biased toward basic and acidic residues: residues 773–787 and 796–825; these read DIAR…ESKF and RHDG…DGNG. Residues 841 to 851 show a composition bias toward basic residues; the sequence is GKGKMKGKGTR.

It belongs to the DEAD box helicase family. DDX54/DBP10 subfamily.

It catalyses the reaction ATP + H2O = ADP + phosphate + H(+). The polypeptide is DEAD-box ATP-dependent RNA helicase 29 (Oryza sativa subsp. indica (Rice)).